Reading from the N-terminus, the 351-residue chain is Phosphate acyltransferase (351 aa).

This sequence belongs to the PlsX family. As to quaternary structure, homodimer. Probably interacts with PlsY.

The protein resides in the cytoplasm. It catalyses the reaction a fatty acyl-[ACP] + phosphate = an acyl phosphate + holo-[ACP]. It participates in lipid metabolism; phospholipid metabolism. Catalyzes the reversible formation of acyl-phosphate (acyl-PO(4)) from acyl-[acyl-carrier-protein] (acyl-ACP). This enzyme utilizes acyl-ACP as fatty acyl donor, but not acyl-CoA. The protein is Phosphate acyltransferase of Neisseria meningitidis serogroup A / serotype 4A (strain DSM 15465 / Z2491).